Consider the following 112-residue polypeptide: Nitrogen regulatory protein P-II (112 aa).

O-UMP-tyrosine is present on Y51.

It belongs to the P(II) protein family. In terms of assembly, homotrimer.

It is found in the plastid. The protein localises to the chloroplast. In terms of biological role, P-II indirectly controls the transcription of the glutamine synthetase gene (glnA). P-II prevents NR-II-catalyzed conversion of NR-I to NR-I-phosphate, the transcriptional activator of glnA. When P-II is uridylylated to P-II-UMP, these events are reversed. When the ratio of Gln to 2-ketoglutarate decreases, P-II is uridylylated to P-II-UMP, which causes the deadenylation of glutamine synthetase, so activating the enzyme. This Pyropia yezoensis (Susabi-nori) protein is Nitrogen regulatory protein P-II (glnB).